Consider the following 178-residue polypeptide: ATP-dependent protease subunit HslV (178 aa).

Residue threonine 5 is part of the active site. 3 residues coordinate Na(+): glycine 161, cysteine 164, and threonine 167.

Belongs to the peptidase T1B family. HslV subfamily. A double ring-shaped homohexamer of HslV is capped on each side by a ring-shaped HslU homohexamer. The assembly of the HslU/HslV complex is dependent on binding of ATP.

Its subcellular location is the cytoplasm. It carries out the reaction ATP-dependent cleavage of peptide bonds with broad specificity.. Its activity is regulated as follows. Allosterically activated by HslU binding. Protease subunit of a proteasome-like degradation complex believed to be a general protein degrading machinery. In Nitratiruptor sp. (strain SB155-2), this protein is ATP-dependent protease subunit HslV.